A 139-amino-acid chain; its full sequence is Nucleoside diphosphate kinase (139 aa).

ATP-binding residues include Lys-9, Phe-57, Arg-85, Thr-91, Arg-102, and Asn-112. The active-site Pros-phosphohistidine intermediate is the His-115.

The protein belongs to the NDK family. As to quaternary structure, homotetramer. Requires Mg(2+) as cofactor.

It localises to the cytoplasm. The catalysed reaction is a 2'-deoxyribonucleoside 5'-diphosphate + ATP = a 2'-deoxyribonucleoside 5'-triphosphate + ADP. It catalyses the reaction a ribonucleoside 5'-diphosphate + ATP = a ribonucleoside 5'-triphosphate + ADP. Its function is as follows. Major role in the synthesis of nucleoside triphosphates other than ATP. The ATP gamma phosphate is transferred to the NDP beta phosphate via a ping-pong mechanism, using a phosphorylated active-site intermediate. The polypeptide is Nucleoside diphosphate kinase (Exiguobacterium sp. (strain ATCC BAA-1283 / AT1b)).